Consider the following 423-residue polypeptide: Glutamate-1-semialdehyde 2,1-aminomutase (423 aa).

Lysine 262 carries the N6-(pyridoxal phosphate)lysine modification.

The protein belongs to the class-III pyridoxal-phosphate-dependent aminotransferase family. HemL subfamily. As to quaternary structure, homodimer. Pyridoxal 5'-phosphate serves as cofactor.

The protein localises to the cytoplasm. The catalysed reaction is (S)-4-amino-5-oxopentanoate = 5-aminolevulinate. It participates in porphyrin-containing compound metabolism; protoporphyrin-IX biosynthesis; 5-aminolevulinate from L-glutamyl-tRNA(Glu): step 2/2. This chain is Glutamate-1-semialdehyde 2,1-aminomutase, found in Campylobacter fetus subsp. fetus (strain 82-40).